A 123-amino-acid chain; its full sequence is Small ribosomal subunit protein uS12 (123 aa).

Residue D89 is modified to 3-methylthioaspartic acid. A disordered region spans residues T101 to K123. The segment covering S113 to K123 has biased composition (basic residues).

The protein belongs to the universal ribosomal protein uS12 family. As to quaternary structure, part of the 30S ribosomal subunit. Contacts proteins S8 and S17. May interact with IF1 in the 30S initiation complex.

With S4 and S5 plays an important role in translational accuracy. Its function is as follows. Interacts with and stabilizes bases of the 16S rRNA that are involved in tRNA selection in the A site and with the mRNA backbone. Located at the interface of the 30S and 50S subunits, it traverses the body of the 30S subunit contacting proteins on the other side and probably holding the rRNA structure together. The combined cluster of proteins S8, S12 and S17 appears to hold together the shoulder and platform of the 30S subunit. This is Small ribosomal subunit protein uS12 from Solidesulfovibrio magneticus (strain ATCC 700980 / DSM 13731 / RS-1) (Desulfovibrio magneticus).